The following is a 496-amino-acid chain: Probable 26S proteasome non-ATPase regulatory subunit 3 (496 aa).

The PCI domain occupies 249–428; that stretch reads ARFLYYLGRI…GYMRSKESTD (180 aa). The disordered stretch occupies residues 458-480; that stretch reads RYPPKSYGKELESAEERREREQQ. Basic and acidic residues predominate over residues 464 to 480; it reads YGKELESAEERREREQQ.

This sequence belongs to the proteasome subunit S3 family. The 26S proteasome is composed of a core protease, known as the 20S proteasome, capped at one or both ends by the 19S regulatory complex (RC). The RC is composed of at least 18 different subunits in two subcomplexes, the base and the lid, which form the portions proximal and distal to the 20S proteolytic core, respectively.

Functionally, acts as a regulatory subunit of the 26 proteasome which is involved in the ATP-dependent degradation of ubiquitinated proteins. The polypeptide is Probable 26S proteasome non-ATPase regulatory subunit 3 (Dox-A2) (Anopheles gambiae (African malaria mosquito)).